The sequence spans 385 residues: Putative transport protein BpOF4_00890 (385 aa).

8 helical membrane-spanning segments follow: residues 42-62, 63-83, 93-113, 191-211, 255-275, 276-296, 304-324, and 350-370; these read TIWIIISILLFLVAAYFILPV, SLPLVAALLTALILTPAVNAL, VAVMLVFTVFVVFIGLSGYYI, SIPGYLVTFLVYLIALFLFML, IIIFIVTLIGLLFIAPEVALL, MAFIIWLIDFVPIIGSIVILA, IVGDVSTGSKLLILAAVLLII, and LGLMLFGVIGFIIGPLLVIAF.

This sequence belongs to the autoinducer-2 exporter (AI-2E) (TC 2.A.86) family.

The protein resides in the cell membrane. This chain is Putative transport protein BpOF4_00890, found in Alkalihalophilus pseudofirmus (strain ATCC BAA-2126 / JCM 17055 / OF4) (Bacillus pseudofirmus).